Here is a 180-residue protein sequence, read N- to C-terminus: Large ribosomal subunit protein uL6 (180 aa).

The protein belongs to the universal ribosomal protein uL6 family. As to quaternary structure, part of the 50S ribosomal subunit.

This protein binds to the 23S rRNA, and is important in its secondary structure. It is located near the subunit interface in the base of the L7/L12 stalk, and near the tRNA binding site of the peptidyltransferase center. The protein is Large ribosomal subunit protein uL6 of Thermoanaerobacter sp. (strain X514).